The chain runs to 485 residues: Mitochondrial metalloendopeptidase OMA1 (485 aa).

The N-terminal 16 residues, 1-16 (MKPSLKRRLLLLSRKF), are a transit peptide targeting the mitochondrion. Over 17 to 147 (AKASIRKLLR…GPGRWFQNPR (131 aa)) the chain is Mitochondrial matrix. Residues 148-168 (TVFTVVLVGSVGLITLIVGNT) form a helical membrane-spanning segment. Residues 169–485 (ETIPYTKRTH…AGRTGVEGFL (317 aa)) are Mitochondrial intermembrane-facing. Position 352 (His352) interacts with Zn(2+). The active site involves Glu353. Residues His356 and Glu405 each coordinate Zn(2+). The segment at 456–485 (KLLAQANVMEEALMIYREVQAGRTGVEGFL) is required for protease activation.

Belongs to the peptidase M48A family. As to quaternary structure, homooligomer. Zn(2+) serves as cofactor.

Its subcellular location is the mitochondrion inner membrane. In terms of biological role, protease that is part of the quality control system in the inner membrane of mitochondria. Metalloendopeptidase that modulates the oxidative phosphorylation (OXPHOS) system and plant growth. Involved in tolerance mechanisms to heat, osmotic and oxidative stresses. The protein is Mitochondrial metalloendopeptidase OMA1 of Arabidopsis thaliana (Mouse-ear cress).